Consider the following 1543-residue polypeptide: ATP-binding cassette sub-family A member 10 (1543 aa).

Transmembrane regions (helical) follow at residues Y83–T103, W135–V155, I185–V205, F210–L230, L240–L260, L264–M284, and I310–F330. The region spanning I391 to H626 is the ABC transporter 1 domain. Residue G427–S434 coordinates ATP. 8 consecutive transmembrane segments (helical) span residues L774 to M794, L890 to F910, I926 to V946, I985 to G1005, F1014 to L1034, G1046 to T1066, L1073 to I1093, and K1113 to I1133. Positions I1153 to P1164 are enriched in basic and acidic residues. Residues I1153–E1177 form a disordered region. The segment covering E1165–V1174 has biased composition (acidic residues). Positions Y1206–K1440 constitute an ABC transporter 2 domain. G1239 to S1246 provides a ligand contact to ATP.

Belongs to the ABC transporter superfamily. ABCA family. In terms of tissue distribution, widely expressed. Highly expressed in skeletal muscle, heart, brain and gastrointestinal tract.

It is found in the membrane. In terms of biological role, probable transporter which may play a role in macrophage lipid transport and homeostasis. The polypeptide is ATP-binding cassette sub-family A member 10 (ABCA10) (Homo sapiens (Human)).